The sequence spans 202 residues: Imidazole glycerol phosphate synthase subunit HisH 2 (202 aa).

The region spanning 1–202 is the Glutamine amidotransferase type-1 domain; the sequence is MIVVIDYGVG…QLFKNFVELV (202 aa). Residue Cys80 is the Nucleophile of the active site. Residues His183 and Glu185 contribute to the active site.

Heterodimer of HisH and HisF.

Its subcellular location is the cytoplasm. The catalysed reaction is 5-[(5-phospho-1-deoxy-D-ribulos-1-ylimino)methylamino]-1-(5-phospho-beta-D-ribosyl)imidazole-4-carboxamide + L-glutamine = D-erythro-1-(imidazol-4-yl)glycerol 3-phosphate + 5-amino-1-(5-phospho-beta-D-ribosyl)imidazole-4-carboxamide + L-glutamate + H(+). The enzyme catalyses L-glutamine + H2O = L-glutamate + NH4(+). It functions in the pathway amino-acid biosynthesis; L-histidine biosynthesis; L-histidine from 5-phospho-alpha-D-ribose 1-diphosphate: step 5/9. IGPS catalyzes the conversion of PRFAR and glutamine to IGP, AICAR and glutamate. The HisH subunit catalyzes the hydrolysis of glutamine to glutamate and ammonia as part of the synthesis of IGP and AICAR. The resulting ammonia molecule is channeled to the active site of HisF. The sequence is that of Imidazole glycerol phosphate synthase subunit HisH 2 (hisH2) from Pseudomonas aeruginosa (strain ATCC 15692 / DSM 22644 / CIP 104116 / JCM 14847 / LMG 12228 / 1C / PRS 101 / PAO1).